A 113-amino-acid chain; its full sequence is T cell receptor alpha variable 13-2 (113 aa).

A signal peptide spans 1-21 (MAGIRALFMYLWLQLDWVSRG). The Ig-like domain occupies 22–113 (ESVGLHLPTL…DSAVYFCAEN (92 aa)). C43 and C110 are disulfide-bonded. N87 is a glycosylation site (N-linked (GlcNAc...) asparagine).

Alpha-beta TR is a heterodimer composed of an alpha and beta chain; disulfide-linked. The alpha-beta TR is associated with the transmembrane signaling CD3 coreceptor proteins to form the TR-CD3 (TcR or TCR). The assembly of alpha-beta TR heterodimers with CD3 occurs in the endoplasmic reticulum where a single alpha-beta TR heterodimer associates with one CD3D-CD3E heterodimer, one CD3G-CD3E heterodimer and one CD247 homodimer forming a stable octameric structure. CD3D-CD3E and CD3G-CD3E heterodimers preferentially associate with TR alpha and TR beta chains, respectively. The association of the CD247 homodimer is the last step of TcR assembly in the endoplasmic reticulum and is required for transport to the cell surface.

It is found in the cell membrane. Functionally, v region of the variable domain of T cell receptor (TR) alpha chain that participates in the antigen recognition. Alpha-beta T cell receptors are antigen specific receptors which are essential to the immune response and are present on the cell surface of T lymphocytes. Recognize peptide-major histocompatibility (MH) (pMH) complexes that are displayed by antigen presenting cells (APC), a prerequisite for efficient T cell adaptive immunity against pathogens. Binding of alpha-beta TR to pMH complex initiates TR-CD3 clustering on the cell surface and intracellular activation of LCK that phosphorylates the ITAM motifs of CD3G, CD3D, CD3E and CD247 enabling the recruitment of ZAP70. In turn ZAP70 phosphorylates LAT, which recruits numerous signaling molecules to form the LAT signalosome. The LAT signalosome propagates signal branching to three major signaling pathways, the calcium, the mitogen-activated protein kinase (MAPK) kinase and the nuclear factor NF-kappa-B (NF-kB) pathways, leading to the mobilization of transcription factors that are critical for gene expression and essential for T cell growth and differentiation. The T cell repertoire is generated in the thymus, by V-(D)-J rearrangement. This repertoire is then shaped by intrathymic selection events to generate a peripheral T cell pool of self-MH restricted, non-autoaggressive T cells. Post-thymic interaction of alpha-beta TR with the pMH complexes shapes TR structural and functional avidity. This is T cell receptor alpha variable 13-2 from Homo sapiens (Human).